The sequence spans 845 residues: MKRKSSHYNDAHASHINEDIEESYKDLYNNLSPSSTILLLLYARWFPATLIHFLDKYYTSTPILIDMIHKQCIYNPPKGSLHVQLEYYLAFLNRMALIFDRFPDLFPTEISKVKFFTKDFSKKDKLTALDTYRSFPGSTWKTIVTFATQEVFYLPEGLEPLKRDFSSMDKLKLIGKITYKLRLKGDTALKFAYLHAPSDVRDKVFDDAFWQEIITPKASLEQQSNNIPTGIQDSSKYTVNGPTERDNKSMKSFVRSFFTSTDSSVADTTIIPSMTQQFDKDPSTLVQSSIDKEIQVKEDGTTSSVAVNAETAVQNVNGTIKESQGTESISFASKNNSAPSADANNGNMTKLVSKEKAFLNTVTTPNADLIISEEDELTEMTLRTANGSEPTKKSNRSEQSKTVANTNVGSKNGTTPRSFAQKSSKRIKPTEGSANLNTVTELTGIGSRIAMNGSSVKASNISTEKSKTIAKPKPAKELSPQATLNSPIQSAEAGNVELKLHPQTPDRIVKVERKVHSLNMTLRSPKAGSAGKENSWRSKYLSEGKNSKAKYTAKQPSYDRAGSSLASPTKSSASPLVKAPKETPERLCTENQSTENEDQANLKESELPKEKSDIQPKNSRSTIEYIETSTRVYEMPKDTIPSRFKTSISTEVHDGRLKKYPYYHVKTPEKGTTVVSRTVTSPKSGAYASPSKASYNQDSSPNASLEQCFVQRSPSKMLTTLRNNSSTFPSLRKNAMIARKSTADSLSSPKRQSVPSTPKASLSPRVHKSMTYSPSEASPLYANKSPKSSTMVPLMKYKSGLNEGMRTSSIYSSTSSPYIRDQYFLNRMLTNGSHNGSPSWRDGLL.

A compositionally biased stretch (polar residues) spans 224–241 (SNNIPTGIQDSSKYTVNG). Disordered regions lie at residues 224 to 244 (SNNI…GPTE), 324 to 346 (QGTE…ANNG), 383 to 434 (RTAN…EGSA), 456 to 485 (VKAS…ATLN), 519 to 619 (NMTL…PKNS), 674 to 701 (VVSR…DSSP), and 739 to 785 (RKST…ANKS). Over residues 390 to 399 (PTKKSNRSEQ) the composition is skewed to basic and acidic residues. Over residues 400–422 (SKTVANTNVGSKNGTTPRSFAQK) the composition is skewed to polar residues. Residues 534-546 (NSWRSKYLSEGKN) show a composition bias toward basic and acidic residues. Residues 563–576 (SSLASPTKSSASPL) show a composition bias toward low complexity. Serine 567 is subject to Phosphoserine. Basic and acidic residues-rich tracts occupy residues 579–588 (APKETPERLC) and 600–614 (ANLK…KSDI). Composition is skewed to polar residues over residues 674 to 683 (VVSRTVTSPK), 691 to 701 (SKASYNQDSSP), and 743 to 760 (ADSL…TPKA).

Its subcellular location is the mitochondrion. This is an uncharacterized protein from Schizosaccharomyces pombe (strain 972 / ATCC 24843) (Fission yeast).